Reading from the N-terminus, the 106-residue chain is Large ribosomal subunit protein bL21 (106 aa).

It belongs to the bacterial ribosomal protein bL21 family. In terms of assembly, part of the 50S ribosomal subunit. Contacts protein L20.

Its function is as follows. This protein binds to 23S rRNA in the presence of protein L20. This is Large ribosomal subunit protein bL21 from Fervidobacterium nodosum (strain ATCC 35602 / DSM 5306 / Rt17-B1).